A 400-amino-acid polypeptide reads, in one-letter code: MAGATVTVDEVRKGQRATGPATVLAIGTATPANCVYQADYPDYYFRITKSDHLTDLKEKFKRMCDKSMIRKRYMHLTEEFLSENPSMCAYMAPSLDARQDVVVTEVPKLGKAAAQEAIKEWGQPKSRITHLVFCTTSGVDMPGADYQLTKALGLRVVNRLMMYQQGCFAGGTVLRVAKDVAENNRGARVMVVCSEITAVTFRGPSESHVDSLVGQALFGDGAAAGRGGADPDGRVERPLFQLVSAAQTILPDSEGAIDGHLREVGLAFHLLKDVPGLISKNIERALEDAFEPLGISDWNSIFWVAHPGGPAILDQVEAKVGLDKARMRATRHVLSEYGNMSSACVLFILDEMRKRPAEDGQSTTGEGLDWGVLFGFGPGLTVETVVLHSVPITTGAPTAA.

Residue C167 is part of the active site.

It belongs to the thiolase-like superfamily. Chalcone/stilbene synthases family.

It carries out the reaction (E)-4-coumaroyl-CoA + 3 malonyl-CoA + 3 H(+) = 2',4,4',6'-tetrahydroxychalcone + 3 CO2 + 4 CoA. Its pathway is secondary metabolite biosynthesis; flavonoid biosynthesis. The primary product of this enzyme is 4,2',4',6'-tetrahydroxychalcone (also termed naringenin-chalcone or chalcone) which can under specific conditions spontaneously isomerize into naringenin. This is Chalcone synthase WHP1 (WHP1) from Zea mays (Maize).